A 148-amino-acid polypeptide reads, in one-letter code: MAQMTVQVVTPDGLKYDHHASFIHAVTKDGQIGILPGHINLIAPLEVDELKVRRVDDESHVDWIAVNGGIIEVKDDFITIIANSAERDRDIDVSRAERAKQRAERVLEEETKRVLEEATKSDRNDDVQRAQIALRRALNRINVGTKIR.

The protein belongs to the ATPase epsilon chain family. As to quaternary structure, F-type ATPases have 2 components, CF(1) - the catalytic core - and CF(0) - the membrane proton channel. CF(1) has five subunits: alpha(3), beta(3), gamma(1), delta(1), epsilon(1). CF(0) has three main subunits: a, b and c.

Its subcellular location is the cell membrane. Functionally, produces ATP from ADP in the presence of a proton gradient across the membrane. In Streptococcus thermophilus (strain ATCC BAA-491 / LMD-9), this protein is ATP synthase epsilon chain.